The sequence spans 455 residues: O-acyltransferase pigD (455 aa).

The protein belongs to the trichothecene 3-O-acetyltransferase family.

It functions in the pathway secondary metabolite biosynthesis. Functionally, O-acetyltransferase; part of the gene cluster that mediates the biosynthesis of azaphilone pigments (MonAzPs), a complex mixture of compounds with a common azaphilone skeleton very widely used as food colorants. Within the pathway, pigD directly transfers the fatty acyl chain from the beta-ketoacyl-ACP produced by the pigJ-pigK fatty acid synthase (FAS) to the C-4 alcohol. The first step of the pathway is performed by the nrPKS pigA that forms the hexaketide precursor from successive condensations of five malonyl-CoA units, with a simple acetyl-CoA starter unit. The role of esterase pigG is not clear, but it may play at most a supplementary role in the formation of the benzaldehyde produced by the pigA nrPKS. This very reactive benzaldehyde is intercepted by the pigC ketoreductase that to provide the first stable enzyme-free MonAzPs intermediate, 6-(4-hydroxy-2-oxopentyl)-3-methyl-2,4-dioxocyclohexane carbaldehyde, also known as M7PKS-1. The FAD-dependent monooxygenase pigN hydroxylates M7PKS-1 at C-4, which triggers the formation of the pyran ring. PigJ, pigK and pigD are involved in the acetylation of the pyran ring. PigJ and pigK form the two subunits of a dedicated fungal FAS that produces the side chain fatty acyl moiety of MonAzPs and pigD transfers the fatty acyl chain to the C-4 alcohol. PigM and pigO are involved in the elimination of the omega-1 alcohol. PigM acts as an O-acetyltransferase that synthesizes the putative O-11 acetyl intermediate whereas pigO eliminates acetic acid to yield an intermediate with a C10(11) double bond. The dehydration of the C-11 alcohol followed by the reduction of the C6(7) double bond by the NAD(P)H-dependent oxidoreductase pigE increases the electrophilicity of the C-5 ketone of the resulting acyl benzopyran. This in turn sets up the C-5 ketone for an intramolecular Knoevenagel aldol condensation with the C-20 enol of the side chain. This condensation affords the characteristic linear tricyclic carbon skeletons of the yellow pigments that serve as the common precursors for the classical yellow pigments monascin and ankaflavin, orange pigments rubopunctatin and monascorubrin, and red pigments ribropunctamine and monascorubramine. The FAD-dependent oxidoreductase pigF is especially invoved in the biosynthesis of orange and red pigments via desaturation of C6(7). This chain is O-acyltransferase pigD, found in Monascus ruber (Mold).